Consider the following 1370-residue polypeptide: DNA-directed RNA polymerase subunit beta (1370 aa).

This sequence belongs to the RNA polymerase beta chain family. In terms of assembly, the RNAP catalytic core consists of 2 alpha, 1 beta, 1 beta' and 1 omega subunit. When a sigma factor is associated with the core the holoenzyme is formed, which can initiate transcription.

The catalysed reaction is RNA(n) + a ribonucleoside 5'-triphosphate = RNA(n+1) + diphosphate. Its function is as follows. DNA-dependent RNA polymerase catalyzes the transcription of DNA into RNA using the four ribonucleoside triphosphates as substrates. This Bordetella parapertussis (strain 12822 / ATCC BAA-587 / NCTC 13253) protein is DNA-directed RNA polymerase subunit beta.